The sequence spans 324 residues: Cathepsin L-like proteinase (324 aa).

The signal sequence occupies residues 1–16 (MKLIIALAALIVVINA). Intrachain disulfides connect Cys-131–Cys-174, Cys-165–Cys-206, and Cys-263–Cys-312. Cys-134 is a catalytic residue. Active-site residues include His-270 and Asn-290.

Belongs to the peptidase C1 family. Expressed in larval carcasses and gut, and adult gut.

This is Cathepsin L-like proteinase from Phaedon cochleariae (Mustard beetle).